Reading from the N-terminus, the 93-residue chain is Large ribosomal subunit protein uL23cz/uL23cy (93 aa).

This sequence belongs to the universal ribosomal protein uL23 family. In terms of assembly, part of the 50S ribosomal subunit.

Its subcellular location is the plastid. The protein localises to the chloroplast. Functionally, binds to 23S rRNA. The sequence is that of Large ribosomal subunit protein uL23cz/uL23cy (rpl23-A) from Gossypium barbadense (Sea Island cotton).